The sequence spans 105 residues: Large ribosomal subunit protein eL36 (105 aa).

Residues 9–31 (VGLNKGHKVTKNVSKPRHSRRRR) form a disordered region. Residues 13–31 (KGHKVTKNVSKPRHSRRRR) show a composition bias toward basic residues. At Lys62 the chain carries N6-acetyllysine.

The protein belongs to the eukaryotic ribosomal protein eL36 family. As to quaternary structure, component of the large ribosomal subunit.

The protein localises to the cytoplasm. The protein resides in the cytosol. Functionally, component of the large ribosomal subunit. The ribosome is a large ribonucleoprotein complex responsible for the synthesis of proteins in the cell. This Oryctolagus cuniculus (Rabbit) protein is Large ribosomal subunit protein eL36 (RPL36).